Reading from the N-terminus, the 316-residue chain is GMP reductase (316 aa).

Cysteine 175 serves as the catalytic Thioimidate intermediate. Position 202–225 (202–225 (VIADGGIVEHGDIAKALVCGATMV)) interacts with NADP(+).

The protein belongs to the IMPDH/GMPR family. GuaC type 2 subfamily.

It catalyses the reaction IMP + NH4(+) + NADP(+) = GMP + NADPH + 2 H(+). Catalyzes the irreversible NADPH-dependent deamination of GMP to IMP. It functions in the conversion of nucleobase, nucleoside and nucleotide derivatives of G to A nucleotides, and in maintaining the intracellular balance of A and G nucleotides. The sequence is that of GMP reductase from Chromobacterium violaceum (strain ATCC 12472 / DSM 30191 / JCM 1249 / CCUG 213 / NBRC 12614 / NCIMB 9131 / NCTC 9757 / MK).